Consider the following 535-residue polypeptide: MESITLDIELLQLPETSPMSMKSNQDFVKKLFDQWLALPETNRLVTSLVNDAKAGVALNVMCGGGSSGTNSGSNSPLASMFPARNGPPLSPRNSTGSPRIARQRTGLSNLSSPLKVVSDHVKELIPQFYFEDGRPPPNDLKEQCIAKINSLFYGHEDGLQLQEFKLVTTEICKVPSFFSTSIFKKVDTNNTGFVKREDFIDYWVKGNMLTKEITSQVFTILKQPDHNYLVQDDFKPVLQELLATHPGLEFLQGTPEFQDRYAETVIYRIYYYINRSGNGHLTLRELKRGNLVDAMQHADEEEDINKVLRYFSYEHFYVIYCKFWELDTDHDFLIDKENLIRYSNHALTYRIVDRIFSQVPRKFTSKTEGKMGYEDFVYFILAEEDKSSEPSLEYWFKCIDLDANGVLTRNELQFFYEEQLHRMECMAQEAVLFEDILCQLFDMVKPEDEGFICLNDLKGSKLSGNVFNILFNLNKFMAFETRDPFLIRQERANPTWTEWDRFAHREYIRLSMEEDVEDASNGSAEAWDDSLEVPF.

The disordered stretch occupies residues 67–104; that stretch reads SGTNSGSNSPLASMFPARNGPPLSPRNSTGSPRIARQR. 2 consecutive EF-hand domains span residues 174–209 and 387–422; these read VPSF…GNML and SSEP…QLHR. Residues aspartate 400, aspartate 402, asparagine 404, and glutamate 411 each coordinate Ca(2+).

As to quaternary structure, PP2A consists of a common heterodimeric core enzyme, composed of a 36 kDa catalytic subunit (subunit C) and a 65 kDa constant regulatory subunit (PR65 or subunit A), that associates with a variety of regulatory subunits. Proteins that associate with the core dimer include three families of regulatory subunits B (the R2/B/PR55/B55, R3/B''/PR72/PR130/PR59 and R5/B'/B56 families) and cell signaling molecules.

In terms of biological role, probable regulatory subunit of type 2A protein phosphatase. The sequence is that of Probable serine/threonine protein phosphatase 2A regulatory subunit B''delta (B''DELTA) from Arabidopsis thaliana (Mouse-ear cress).